The primary structure comprises 147 residues: Ribonuclease 4 (147 aa).

The first 28 residues, 1 to 28 (MALQRTHSLLLLLLLTLLGLGLVQPSYG), serve as a signal peptide directing secretion. Gln29 carries the pyrrolidone carboxylic acid modification. Positions 35, 40, 68, 71, and 72 each coordinate dUMP. His40 (proton acceptor) is an active-site residue. Disulfide bonds link Cys53/Cys109, Cys67/Cys120, Cys85/Cys135, and Cys92/Cys99. The active-site Proton donor is His144. DUMP is bound at residue Phe145.

The protein belongs to the pancreatic ribonuclease family.

It is found in the secreted. Its function is as follows. Cleaves preferentially after uridine bases. Has antimicrobial activity against uropathogenic E.coli (UPEC). Probably contributes to urinary tract sterility. This chain is Ribonuclease 4 (RNASE4), found in Pongo abelii (Sumatran orangutan).